The primary structure comprises 136 residues: MVLLESEQFLTELTRLFQKCRTSGSVYITLKKYDGRTKPIPKKGTVEGFEPADNKCLLRATDGKKKISTVVSSKEVNKFQMAYSNLLRANMDGLKKRDKKNKTKKTKAAAAAAAAAPAAAATAPTTAATTAATAAQ.

Y27 bears the Phosphotyrosine mark. Positions 116 to 136 (APAAAATAPTTAATTAATAAQ) are disordered.

This sequence belongs to the SRP14 family. In terms of assembly, heterodimer with SRP9; binds RNA as heterodimer. Component of a signal recognition particle (SRP) complex that consists of a 7SL RNA molecule of 300 nucleotides and six protein subunits: SRP72, SRP68, SRP54, SRP19, SRP14 and SRP9.

It localises to the cytoplasm. Functionally, component of the signal recognition particle (SRP) complex, a ribonucleoprotein complex that mediates the cotranslational targeting of secretory and membrane proteins to the endoplasmic reticulum (ER). SRP9 together with SRP14 and the Alu portion of the SRP RNA, constitutes the elongation arrest domain of SRP. The complex of SRP9 and SRP14 is required for SRP RNA binding. The sequence is that of Signal recognition particle 14 kDa protein (SRP14) from Homo sapiens (Human).